The chain runs to 350 residues: Dihydroorotate dehydrogenase (quinone) (350 aa).

FMN-binding positions include Ala-65–Lys-69 and Thr-89. Lys-69 serves as a coordination point for substrate. Asn-114–Phe-118 contributes to the substrate binding site. 2 residues coordinate FMN: Asn-149 and Asn-182. Substrate is bound at residue Asn-182. Ser-185 (nucleophile) is an active-site residue. Asn-187 provides a ligand contact to substrate. The FMN site is built by Lys-227 and Thr-255. Asn-256–Thr-257 is a binding site for substrate. FMN is bound by residues Gly-278, Gly-307, and Tyr-328 to Thr-329.

It belongs to the dihydroorotate dehydrogenase family. Type 2 subfamily. Monomer. The cofactor is FMN.

The protein localises to the cell membrane. The catalysed reaction is (S)-dihydroorotate + a quinone = orotate + a quinol. The protein operates within pyrimidine metabolism; UMP biosynthesis via de novo pathway; orotate from (S)-dihydroorotate (quinone route): step 1/1. Catalyzes the conversion of dihydroorotate to orotate with quinone as electron acceptor. This Polaromonas naphthalenivorans (strain CJ2) protein is Dihydroorotate dehydrogenase (quinone).